We begin with the raw amino-acid sequence, 901 residues long: Probable inorganic carbon transporter subunit DabA (901 aa).

Zn(2+) contacts are provided by cysteine 424, aspartate 426, histidine 606, and cysteine 621.

The protein belongs to the inorganic carbon transporter (TC 9.A.2) DabA family. In terms of assembly, forms a complex with DabB. Zn(2+) is required as a cofactor.

Its subcellular location is the cell membrane. In terms of biological role, part of an energy-coupled inorganic carbon pump. This Staphylococcus aureus (strain USA300) protein is Probable inorganic carbon transporter subunit DabA.